Consider the following 827-residue polypeptide: Glycerol-3-phosphate acyltransferase (827 aa).

Positions 325–330 (CHRSHM) match the HXXXXD motif motif.

The protein belongs to the GPAT/DAPAT family.

It is found in the cell inner membrane. It catalyses the reaction sn-glycerol 3-phosphate + an acyl-CoA = a 1-acyl-sn-glycero-3-phosphate + CoA. It functions in the pathway phospholipid metabolism; CDP-diacylglycerol biosynthesis; CDP-diacylglycerol from sn-glycerol 3-phosphate: step 1/3. This is Glycerol-3-phosphate acyltransferase from Escherichia coli (strain SMS-3-5 / SECEC).